Reading from the N-terminus, the 143-residue chain is Large ribosomal subunit protein uL11 (143 aa).

The protein belongs to the universal ribosomal protein uL11 family. Part of the ribosomal stalk of the 50S ribosomal subunit. Interacts with L10 and the large rRNA to form the base of the stalk. L10 forms an elongated spine to which L12 dimers bind in a sequential fashion forming a multimeric L10(L12)X complex. In terms of processing, one or more lysine residues are methylated.

Forms part of the ribosomal stalk which helps the ribosome interact with GTP-bound translation factors. This is Large ribosomal subunit protein uL11 from Burkholderia ambifaria (strain MC40-6).